A 475-amino-acid chain; its full sequence is Divinyl ether synthase CYP74M1 (475 aa).

Cys-427 provides a ligand contact to heme.

This sequence belongs to the cytochrome P450 family. Heme is required as a cofactor.

It carries out the reaction (13S)-hydroperoxy-(9Z,11E)-octadecadienoate = etheroleate + H2O. The enzyme catalyses (13S)-hydroperoxy-(9Z,11E,15Z)-octadecatrienoate = etherolenate + H2O. The protein operates within lipid metabolism; oxylipin biosynthesis. Functionally, divinyl ether synthase involved in oxylipin biosynthesis. Catalyzes the conversion of (13S)-hydroperoxy-(9Z,11E)-octadecadienoate (13-HPOD) to etheroleate and (13S)-hydroperoxy-(9Z,11E,15Z)-octadecatrienoate (13-HPOT) to etherolenate. Has no activity with the corresponding 9-hydroperoxides (9-HPOD and 9-HPOT). The sequence is that of Divinyl ether synthase CYP74M1 from Selaginella moellendorffii (Spikemoss).